Reading from the N-terminus, the 270-residue chain is Sugar phosphatase YidA (270 aa).

Aspartate 9 (nucleophile) is an active-site residue. Position 9 (aspartate 9) interacts with Mg(2+). Methionine 10 is a phosphate binding site. Aspartate 11 lines the Mg(2+) pocket. Residues 43–44 and lysine 197 each bind phosphate; that span reads TG. Aspartate 220 contributes to the Mg(2+) binding site. Asparagine 223 is a binding site for phosphate.

It belongs to the HAD-like hydrolase superfamily. Cof family. In terms of assembly, homodimer. It depends on Mg(2+) as a cofactor.

It carries out the reaction sugar phosphate + H2O = sugar + phosphate.. Functionally, catalyzes the dephosphorylation of different sugar phosphates. The protein is Sugar phosphatase YidA (yidA) of Escherichia coli O6:H1 (strain CFT073 / ATCC 700928 / UPEC).